Consider the following 90-residue polypeptide: MNKSELIDAIAASADIPKAVAGRALDAVIESVTGALKAGDSVVLVGFGTFAVKERAARTGRNPQTGKPIKIAAAKIPGFKAGKALKDAVN.

It belongs to the bacterial histone-like protein family. Heterodimer of an alpha and a beta chain.

Functionally, histone-like DNA-binding protein which is capable of wrapping DNA to stabilize it, and thus to prevent its denaturation under extreme environmental conditions. This Pseudomonas aeruginosa (strain ATCC 15692 / DSM 22644 / CIP 104116 / JCM 14847 / LMG 12228 / 1C / PRS 101 / PAO1) protein is DNA-binding protein HU-beta (hupB).